The sequence spans 999 residues: MFPNQNNGAAPGQGPAVDGQQSLNYNGLPAQQQQQLAQSTKNVRKKPYVKITEQPAGKALRFRYECEGRSAGSIPGVNSTPENKTYPTIEIVGYKGRAVVVVSCVTKDTPYRPHPHNLVGKEGCKKGVCTLEINSETMRAVFSNLGIQCVKKKDIEAALKAREEIRVDPFKTGFSHRFQPSSIDLNSVRLCFQVFMESEQKGRFTSPLPPVVSEPIFDKKAMSDLVICRLCSCSATVFGNTQIILLCEKVAKEDISVRFFEEKNGQSVWEAFGDFQHTDVHKQTAITFKTPRYHTLDITEPAKVFIQLRRPSDGVTSEALPFEYVPMDSGKHTFWNLHRHLKRKPDEDLFQQILRLDAKREVQPPTIEVIDLDTPKIDVQREIPSEMEFNHEESQQSEPALEQEQSVQQEQYTQEQSLQQEQYTQEQSLQQEQYLQQLEQQQSFQLEEPMQQDQELPAQQSFDQAIDHLPDHTSDHIPEDMEAADAHAEAEAHRLRSEQEKEIDTIIDEKVRELEQLDLGQQLEPRPLTANDKITEWMKSSEIEQQVHEPSPTAEADVLDSALEISKADKTLDELLETVAELDEIYTDFKVQRDTYKNTIQNELAGLQGRAPLQVEDSFDDAATYTSLQIAFKNPVLIPMDDIMPPTPPMSQCAPEDAHQHYDPVEVNSQARKPETPMRPVPPVPPAILTIQYPPEEDKLPPLPPKRIRKQDSNAENRSIEANTVQTKPSTGESPLNKRLPPAPKNPNFNTLPRQKKPGFFSKLFSRRKSKPDLAQGQENSSILDSKANSREPSIGHFNMQDPMRASLRSSKSAAPFISNPAPAKSSPVKAKKPGSKLTKPVGRSVSSVSGKRPAYLNADVVHIPLKGDSVNSLPQQQRTEGYSQSSTISVGAGLDRRTASALQLADIPISEGGMELVAIADRQSLHNLVSSIEGHFNVQLDPNLDLTEAEHFALYTSIPPLAAASEFDETSAYYAPVDAGEILTPDEVAKRLAAANGI.

Residues 1 to 44 (MFPNQNNGAAPGQGPAVDGQQSLNYNGLPAQQQQQLAQSTKNVR) form a disordered region. Residues 47 to 342 (PYVKITEQPA…TFWNLHRHLK (296 aa)) form the RHD domain. S312 bears the Phosphoserine; by PKA mark. Disordered stretches follow at residues 389-424 (FNHEESQQSEPALEQEQSVQQEQYTQEQSLQQEQYT) and 670-851 (QARK…SVSG). Low complexity predominate over residues 402–424 (EQEQSVQQEQYTQEQSLQQEQYT). Residues 668–677 (NSQARKPETP) carry the Nuclear export signal motif. Pro residues predominate over residues 677-686 (PMRPVPPVPP). Residues 710 to 719 (KQDSNAENRS) show a composition bias toward basic and acidic residues. Residues 720 to 734 (IEANTVQTKPSTGES) are compositionally biased toward polar residues. The Nuclear localization signal motif lies at 756–773 (KKPGFFSKLFSRRKSKPD). 2 stretches are compositionally biased toward low complexity: residues 819–829 (SNPAPAKSSPV) and 836–851 (SKLTKPVGRSVSSVSG).

Interacts with tamo via the nuclear localization signal. Interacts with emb, a component of the nuclear export complex. In unchallenged larvae, expression of both isoforms is seen in fat body and gut (isoform A is more abundant). After immune challenge levels of both isoforms are enhanced.

It localises to the cytoplasm. The protein localises to the nucleus. Functionally, embryonic developmental transcription factor. The lateral or ventral identity of a cell depends upon the concentration of this protein in its nucleus during the blastoderm stage. Acts as a morphogenetic transcription factor that specifically binds to the kappa-B-related consensus sequence 5'-GRGAAAANCC-3', located in the enhancer region of zygotic genes such as Zen, Twist, Snail and Decapentaplegic, promoting their expression. Part of a signaling pathway involving NF-kappa-B and Toll-related receptors, that functions in the apoptosis of unfit cells during cell competition. Mediates an immune response in larvae. May be part of a NF-kappa-B and Tollo signaling cascade that regulates development of the peripheral nervous system. The sequence is that of Embryonic polarity protein dorsal (dl) from Drosophila melanogaster (Fruit fly).